A 325-amino-acid polypeptide reads, in one-letter code: Beta-ketoacyl-[acyl-carrier-protein] synthase III (325 aa).

Active-site residues include Cys112 and His250. The tract at residues Gln251–Arg255 is ACP-binding. Residue Asn280 is part of the active site.

Belongs to the thiolase-like superfamily. FabH family. Homodimer.

It localises to the cytoplasm. The catalysed reaction is malonyl-[ACP] + acetyl-CoA + H(+) = 3-oxobutanoyl-[ACP] + CO2 + CoA. It participates in lipid metabolism; fatty acid biosynthesis. Its function is as follows. Catalyzes the condensation reaction of fatty acid synthesis by the addition to an acyl acceptor of two carbons from malonyl-ACP. Catalyzes the first condensation reaction which initiates fatty acid synthesis and may therefore play a role in governing the total rate of fatty acid production. Possesses both acetoacetyl-ACP synthase and acetyl transacylase activities. Its substrate specificity determines the biosynthesis of branched-chain and/or straight-chain of fatty acids. The protein is Beta-ketoacyl-[acyl-carrier-protein] synthase III of Lactococcus lactis subsp. cremoris (strain SK11).